A 150-amino-acid polypeptide reads, in one-letter code: Large ribosomal subunit protein uL15 (150 aa).

Residues 1-15 (MNLSNLQPAEGSTHN) show a composition bias toward polar residues. The segment at 1 to 52 (MNLSNLQPAEGSTHNQNKRLGRGEGSGKGGTSARGHKGAKSRSGYSKKIGFE) is disordered. A compositionally biased stretch (gly residues) spans 23-32 (GEGSGKGGTS).

This sequence belongs to the universal ribosomal protein uL15 family. As to quaternary structure, part of the 50S ribosomal subunit.

Functionally, binds to the 23S rRNA. This chain is Large ribosomal subunit protein uL15, found in Flavobacterium psychrophilum (strain ATCC 49511 / DSM 21280 / CIP 103535 / JIP02/86).